The primary structure comprises 593 residues: Thiol:disulfide interchange protein DsbD (593 aa).

Positions 1–21 (MRALLTFFVAGLLVLSSPAMA) are cleaved as a signal peptide. 2 disulfides stabilise this stretch: Cys-130/Cys-136 and Cys-207/Cys-328. 8 consecutive transmembrane segments (helical) span residues 193 to 215 (LLFL…YPIL), 235 to 257 (LVYV…SAGL), 269 to 291 (LIGL…TLQL), 318 to 340 (GAIS…LLYV), 347 to 369 (LTGG…LVAV), 384 to 401 (RVKT…IFLL), 408 to 425 (MWST…FGWL), and 440 to 462 (SAVG…NYWF). In terms of domain architecture, Thioredoxin spans 451 to 593 (FASAQPALNY…FLEHIQRISN (143 aa)). A disulfide bond links Cys-508 and Cys-511.

It belongs to the thioredoxin family. DsbD subfamily.

Its subcellular location is the cell inner membrane. It catalyses the reaction [protein]-dithiol + NAD(+) = [protein]-disulfide + NADH + H(+). It carries out the reaction [protein]-dithiol + NADP(+) = [protein]-disulfide + NADPH + H(+). Its function is as follows. Required to facilitate the formation of correct disulfide bonds in some periplasmic proteins and for the assembly of the periplasmic c-type cytochromes. Acts by transferring electrons from cytoplasmic thioredoxin to the periplasm. This transfer involves a cascade of disulfide bond formation and reduction steps. The sequence is that of Thiol:disulfide interchange protein DsbD from Vibrio vulnificus (strain CMCP6).